Consider the following 187-residue polypeptide: Ribosome-recycling factor (187 aa).

Belongs to the RRF family.

It localises to the cytoplasm. Its function is as follows. Responsible for the release of ribosomes from messenger RNA at the termination of protein biosynthesis. May increase the efficiency of translation by recycling ribosomes from one round of translation to another. The chain is Ribosome-recycling factor from Parvibaculum lavamentivorans (strain DS-1 / DSM 13023 / NCIMB 13966).